We begin with the raw amino-acid sequence, 321 residues long: NADH-ubiquinone oxidoreductase chain 1 (321 aa).

The next 8 membrane-spanning stretches (helical) occupy residues 6-26 (IVPPALLIISILMAVAFLTAL), 67-87 (LLATPTLFILAPTAALMLALA), 103-123 (LGLLLLLAMSSLMVYSFLWSG), 143-163 (ISYEVTLAIIVLSIVLLSGGF), 174-194 (PLYLALATWPSMMMWYTSTLA), 220-240 (ASPFALFFLAEYANIMLMNTL), 256-276 (ALFTIALMSKALLLTMSFLWV), and 296-316 (FLPMTLTLCLWHSSVPMSMFG).

This sequence belongs to the complex I subunit 1 family.

Its subcellular location is the mitochondrion inner membrane. It catalyses the reaction a ubiquinone + NADH + 5 H(+)(in) = a ubiquinol + NAD(+) + 4 H(+)(out). In terms of biological role, core subunit of the mitochondrial membrane respiratory chain NADH dehydrogenase (Complex I) that is believed to belong to the minimal assembly required for catalysis. Complex I functions in the transfer of electrons from NADH to the respiratory chain. The immediate electron acceptor for the enzyme is believed to be ubiquinone. This Alligator mississippiensis (American alligator) protein is NADH-ubiquinone oxidoreductase chain 1 (MT-ND1).